We begin with the raw amino-acid sequence, 317 residues long: tRNA dimethylallyltransferase (317 aa).

An ATP-binding site is contributed by 14-21 (GPTAVGKT). 16–21 (TAVGKT) is a binding site for substrate. Positions 39–42 (DSMQ) are interaction with substrate tRNA.

The protein belongs to the IPP transferase family. As to quaternary structure, monomer. Mg(2+) is required as a cofactor.

It catalyses the reaction adenosine(37) in tRNA + dimethylallyl diphosphate = N(6)-dimethylallyladenosine(37) in tRNA + diphosphate. Functionally, catalyzes the transfer of a dimethylallyl group onto the adenine at position 37 in tRNAs that read codons beginning with uridine, leading to the formation of N6-(dimethylallyl)adenosine (i(6)A). The sequence is that of tRNA dimethylallyltransferase from Bacillus cereus (strain ATCC 14579 / DSM 31 / CCUG 7414 / JCM 2152 / NBRC 15305 / NCIMB 9373 / NCTC 2599 / NRRL B-3711).